The sequence spans 264 residues: 3-methyl-2-oxobutanoate hydroxymethyltransferase (264 aa).

2 residues coordinate Mg(2+): D45 and D84. Residues D45–S46, D84, and K112 each bind 3-methyl-2-oxobutanoate. E114 contacts Mg(2+). E181 acts as the Proton acceptor in catalysis.

Belongs to the PanB family. Homodecamer; pentamer of dimers. It depends on Mg(2+) as a cofactor.

The protein resides in the cytoplasm. It carries out the reaction 3-methyl-2-oxobutanoate + (6R)-5,10-methylene-5,6,7,8-tetrahydrofolate + H2O = 2-dehydropantoate + (6S)-5,6,7,8-tetrahydrofolate. The protein operates within cofactor biosynthesis; (R)-pantothenate biosynthesis; (R)-pantoate from 3-methyl-2-oxobutanoate: step 1/2. Its function is as follows. Catalyzes the reversible reaction in which hydroxymethyl group from 5,10-methylenetetrahydrofolate is transferred onto alpha-ketoisovalerate to form ketopantoate. In Shewanella sediminis (strain HAW-EB3), this protein is 3-methyl-2-oxobutanoate hydroxymethyltransferase.